A 170-amino-acid polypeptide reads, in one-letter code: Adenine phosphoribosyltransferase (170 aa).

The protein belongs to the purine/pyrimidine phosphoribosyltransferase family. Homodimer.

The protein localises to the cytoplasm. It catalyses the reaction AMP + diphosphate = 5-phospho-alpha-D-ribose 1-diphosphate + adenine. The protein operates within purine metabolism; AMP biosynthesis via salvage pathway; AMP from adenine: step 1/1. Functionally, catalyzes a salvage reaction resulting in the formation of AMP, that is energically less costly than de novo synthesis. This Cenarchaeum symbiosum (strain A) protein is Adenine phosphoribosyltransferase.